A 484-amino-acid polypeptide reads, in one-letter code: Probable cobyric acid synthase (484 aa).

The GATase cobBQ-type domain occupies 247–433 (ELHIQIVKLP…LHGIFHNFAF (187 aa)). The Nucleophile role is filled by Cys325. His425 is an active-site residue.

It belongs to the CobB/CobQ family. CobQ subfamily.

It functions in the pathway cofactor biosynthesis; adenosylcobalamin biosynthesis. Its function is as follows. Catalyzes amidations at positions B, D, E, and G on adenosylcobyrinic A,C-diamide. NH(2) groups are provided by glutamine, and one molecule of ATP is hydrogenolyzed for each amidation. The chain is Probable cobyric acid synthase from Thermococcus onnurineus (strain NA1).